Reading from the N-terminus, the 504-residue chain is Fumitremorgin C monooxygenase (504 aa).

A helical transmembrane segment spans residues leucine 9–phenylalanine 29. Cysteine 442 contacts heme.

Belongs to the cytochrome P450 family. It depends on heme as a cofactor.

It localises to the membrane. The enzyme catalyses fumitremorgin C + 2 reduced [NADPH--hemoprotein reductase] + 2 O2 = 12alpha,13alpha-dihydroxyfumitremorgin C + 2 oxidized [NADPH--hemoprotein reductase] + 2 H2O + 2 H(+). The protein operates within mycotoxin biosynthesis. Functionally, cytochrome P450 monooxygenase; part of the gene cluster that mediates the biosynthesis of fumitremorgins, indole alkaloids that carry not only intriguing chemical structures, but also interesting biological and pharmacological activities. The biosynthesis of fumitremorgin-type alkaloids begins by condensation of the two amino acids L-tryptophan and L-proline to brevianamide F, catalyzed by the non-ribosomal peptide synthetase ftmPS/ftmA. Brevianamide F is then prenylated by the prenyltransferase ftmPT1/ftmB in the presence of dimethylallyl diphosphate, resulting in the formation of tryprostatin B. The three cytochrome P450 monooxygenases, ftmP450-1/ftmC, ftmP450-2/ftmE and ftmP450-3/FtmG, are responsible for the conversion of tryprostatin B to 6-hydroxytryprostatin B, tryprostatin A to fumitremorgin C and fumitremorgin C to 12,13-dihydroxyfumitremorgin C, respectively. The putative methyltransferase ftmMT/ftmD is expected for the conversion of 6-hydroxytryprostatin B to tryprostatin A. FtmPT2/FtmH catalyzes the prenylation of 12,13-dihydroxyfumitre-morgin C in the presence of dimethylallyl diphosphate, resulting in the formation of fumitremorgin B. Fumitremorgin B is further converted to verruculogen by ftmOx1/ftmF via the insertion of an endoperoxide bond between the two prenyl moieties. Finally, verruculogen is further converted to fumitremorgin A by the verruculogen prenyltransferase ftmPT3. The chain is Fumitremorgin C monooxygenase from Neosartorya fischeri (strain ATCC 1020 / DSM 3700 / CBS 544.65 / FGSC A1164 / JCM 1740 / NRRL 181 / WB 181) (Aspergillus fischerianus).